The sequence spans 373 residues: Sodium-dependent organic anion transporter (373 aa).

The span at 1 to 15 (MSTDCAGNSTCPVNS) shows a compositional bias: polar residues. Positions 1–21 (MSTDCAGNSTCPVNSTEEDPP) are disordered. The Extracellular portion of the chain corresponds to 1–32 (MSTDCAGNSTCPVNSTEEDPPVGMEGHANLKL). N-linked (GlcNAc...) asparagine glycans are attached at residues N8 and N14. The helical transmembrane segment at 33-53 (LFTVLSAVMVGLVMFSFGCSV) threads the bilayer. Over 54–67 (ESQKLWLHLRRPWG) the chain is Cytoplasmic. The chain crosses the membrane as a helical span at residues 68–88 (IAVGLLSQFGLMPLTAYLLAI). At 89 to 97 (GFGLKPFQA) the chain is on the extracellular side. The chain crosses the membrane as a helical span at residues 98–118 (IAVLMMGSCPGGTISNVLTFW). The Cytoplasmic segment spans residues 119 to 126 (VDGDMDLS). Residues 127 to 147 (ISMTTCSTVAALGMMPLCLYI) traverse the membrane as a helical segment. Residues 148–157 (YTRSWTLTQN) lie on the Extracellular side of the membrane. Residues 158 to 178 (LVIPYQSIGITLVSLVVPVAS) form a helical membrane-spanning segment. At 179–195 (GVYVNYRWPKQATVILK) the chain is on the cytoplasmic side. Residues 196-216 (VGAILGGMLLLVVAVTGMVLA) form a helical membrane-spanning segment. The Extracellular segment spans residues 217–224 (KGWNTDVT). Residues 225-245 (LLVISCIFPLVGHVTGFLLAF) traverse the membrane as a helical segment. The Cytoplasmic segment spans residues 246–265 (LTHQSWQRCRTISIETGAQN). A helical membrane pass occupies residues 266–283 (IQLCIAMLQLSFSAEYLV). A topological domain (extracellular) is located at residue Q284. Residues 285–305 (LLNFALAYGLFQVLHGLLIVA) form a helical membrane-spanning segment. At 306 to 373 (AYQAYKRRQK…ELTSHIPSCE (68 aa)) the chain is on the cytoplasmic side.

It belongs to the bile acid:sodium symporter (BASS) (TC 2.A.28) family. Post-translationally, glycosylated. Highest expression in lung and testis, moderate expression in heart, bladder and skin, and low expression in blood, liver, stomach, small intestine, spleen, kidney, adrenal gland, seminal vesicle, preputial gland, coagulating gland, lacrimal gland/eye, and brain.

Its subcellular location is the membrane. The catalysed reaction is estrone 3-sulfate(out) + 2 Na(+)(out) = estrone 3-sulfate(in) + 2 Na(+)(in). It carries out the reaction 17beta-estradiol 3-sulfate(out) + 2 Na(+)(out) = 17beta-estradiol 3-sulfate(in) + 2 Na(+)(in). It catalyses the reaction dehydroepiandrosterone 3-sulfate(out) + 2 Na(+)(out) = dehydroepiandrosterone 3-sulfate(in) + 2 Na(+)(in). The enzyme catalyses androst-5-ene-diol 3-sulfate(out) + 2 Na(+)(out) = androst-5-ene-diol 3-sulfate(in) + 2 Na(+)(in). The catalysed reaction is pregnenolone sulfate(out) + 2 Na(+)(out) = pregnenolone sulfate(in) + 2 Na(+)(in). It carries out the reaction taurolithocholate 3-sulfate(out) + 2 Na(+)(out) = taurolithocholate 3-sulfate(in) + 2 Na(+)(in). It catalyses the reaction androsterone 3alpha-sulfate(out) + 2 Na(+)(out) = androsterone 3alpha-sulfate(in) + 2 Na(+)(in). The enzyme catalyses 5alpha-dihydrotestosterone sulfate(out) + 2 Na(+)(out) = 5alpha-dihydrotestosterone sulfate(in) + 2 Na(+)(in). The catalysed reaction is 17beta-estradiol 17-sulfate(out) + 2 Na(+)(out) = 17beta-estradiol 17-sulfate(in) + 2 Na(+)(in). It carries out the reaction 17alpha-hydroxypregnenolone 3-sulfate(out) + 2 Na(+)(out) = 17alpha-hydroxypregnenolone 3-sulfate(in) + 2 Na(+)(in). It catalyses the reaction epiandrosterone 3-sulfate(out) + 2 Na(+)(out) = epiandrosterone 3-sulfate(in) + 2 Na(+)(in). The enzyme catalyses epitestosterone 17-sulfate(out) + 2 Na(+)(out) = epitestosterone 17-sulfate(in) + 2 Na(+)(in). The catalysed reaction is testosterone 17-sulfate(out) + 2 Na(+)(out) = testosterone 17-sulfate(in) + 2 Na(+)(in). It carries out the reaction 16alpha-hydroxydehydroepiandrosterone 3-sulfate(out) + 2 Na(+)(out) = 16alpha-hydroxydehydroepiandrosterone 3-sulfate(in) + 2 Na(+)(in). Transports sulfoconjugated steroid hormones from the extracellular compartment into the cytosol in a sodium-dependent manner without hydrolysis. Steroid sulfate hormones are commonly considered to be biologically inactive metabolites, that may be activated by steroid sulfatases into free steroids. May play an important role by delivering sulfoconjugated steroids to specific target cells in reproductive organs. May play a role transporting the estriol precursor 16alpha-hydroxydehydroepiandrosterone 3-sulfate (16a-OH-DHEAS) at the fetal blood vessel endothelium. Can also transport other sulfoconjugated molecules such as taurolithocholic acid-3-sulfate and sulfoconjugated pyrenes. This is Sodium-dependent organic anion transporter (Slc10a6) from Mus musculus (Mouse).